Consider the following 245-residue polypeptide: Rhamnogalacturonan acetylesterase (245 aa).

A signal peptide spans 1–17; the sequence is MKSIALTSLSLLPSALA. Serine 26 (nucleophile) is an active-site residue. An intrachain disulfide couples cysteine 100 to cysteine 108. Catalysis depends on residues aspartate 204 and histidine 207. The cysteines at positions 226 and 244 are disulfide-linked.

It belongs to the 'GDSL' lipolytic enzyme family.

The protein resides in the secreted. It catalyses the reaction Hydrolytic cleavage of 2-O-acetyl- or 3-O-acetyl groups of alpha-D-galacturonic acid in rhamnogalacturonan I.. Plays a key role in the degradation of rhamnogalacturonan in the cell wall. Involved in degradation of pectin. This chain is Rhamnogalacturonan acetylesterase, found in Emericella nidulans (strain FGSC A4 / ATCC 38163 / CBS 112.46 / NRRL 194 / M139) (Aspergillus nidulans).